A 516-amino-acid polypeptide reads, in one-letter code: Maturase K (516 aa).

It belongs to the intron maturase 2 family. MatK subfamily.

The protein localises to the plastid. Its subcellular location is the chloroplast. Functionally, usually encoded in the trnK tRNA gene intron. Probably assists in splicing its own and other chloroplast group II introns. The sequence is that of Maturase K from Disporum sessile (Japanese fairy bells).